A 443-amino-acid polypeptide reads, in one-letter code: Tubulin beta chain (443 aa).

Residues Q11, E69, S138, G142, T143, G144, N204, and N226 each coordinate GTP. E69 contacts Mg(2+). The disordered stretch occupies residues 424–443; that stretch reads QYQDATAEEEGEFEEEEGEN. A compositionally biased stretch (acidic residues) spans 429–443; the sequence is TAEEEGEFEEEEGEN.

This sequence belongs to the tubulin family. As to quaternary structure, dimer of alpha and beta chains. A typical microtubule is a hollow water-filled tube with an outer diameter of 25 nm and an inner diameter of 15 nM. Alpha-beta heterodimers associate head-to-tail to form protofilaments running lengthwise along the microtubule wall with the beta-tubulin subunit facing the microtubule plus end conferring a structural polarity. Microtubules usually have 13 protofilaments but different protofilament numbers can be found in some organisms and specialized cells. Mg(2+) is required as a cofactor. Some glutamate residues at the C-terminus are either polyglutamylated or polyglycylated. These 2 modifications occur exclusively on glutamate residues and result in either polyglutamate or polyglycine chains on the gamma-carboxyl group. Both modifications can coexist on the same protein on adjacent residues, and lowering polyglycylation levels increases polyglutamylation, and reciprocally. The precise function of such modifications is still unclear but they regulate the assembly and dynamics of axonemal microtubules.

It localises to the cytoplasm. The protein resides in the cytoskeleton. Its function is as follows. Tubulin is the major constituent of microtubules, a cylinder consisting of laterally associated linear protofilaments composed of alpha- and beta-tubulin heterodimers. Microtubules grow by the addition of GTP-tubulin dimers to the microtubule end, where a stabilizing cap forms. Below the cap, tubulin dimers are in GDP-bound state, owing to GTPase activity of alpha-tubulin. The chain is Tubulin beta chain (BTU1) from Tetrahymena thermophila.